The following is a 317-amino-acid chain: MNDLIKDLGSEVRANVLAEALPWLQHFRDKIVVVKYGGNAMVDDDLKAAFAADMVFLRTVGAKPVVVHGGGPQISEMLNRVGLQGEFKGGFRVTTPEVMDIVRMVLFGQVGRDLVGLINSHGPYAVGTSGEDAGLFTAQKRMVNIDGVPTDIGLVGDIINVDASSLMDIIEAGRIPVVSTIAPGEDGQIYNINADTAAGALAAAIGAERLLVLTNVEGLYTDWPDKSSLVSKIKATELEAILPGLDSGMIPKMESCLNAVRGGVSAAHVIDGRIAHSVLLELLTMGGIGTMVLPDVFDRENYPEGTVFRKDDKDGEL.

Residues 70 to 71 (GG), arginine 92, and asparagine 191 each bind substrate.

The protein belongs to the acetylglutamate kinase family. ArgB subfamily.

The protein localises to the cytoplasm. The catalysed reaction is N-acetyl-L-glutamate + ATP = N-acetyl-L-glutamyl 5-phosphate + ADP. The protein operates within amino-acid biosynthesis; L-arginine biosynthesis; N(2)-acetyl-L-ornithine from L-glutamate: step 2/4. In terms of biological role, catalyzes the ATP-dependent phosphorylation of N-acetyl-L-glutamate. The sequence is that of Acetylglutamate kinase from Corynebacterium glutamicum (strain R).